Reading from the N-terminus, the 409-residue chain is Casein kinase II subunit alpha-1 (409 aa).

An N-terminal signal peptide occupies residues 1 to 35 (MIDTLFFLFFLFFDSPLRRLLLLCAVLALRAPTAH). N72 is a glycosylation site (N-linked (GlcNAc...) asparagine). The 286-residue stretch at 110–395 (YEVVRKVGRG…AKEAMAHAYF (286 aa)) folds into the Protein kinase domain. Residues 116–124 (VGRGKYSEV) and K139 each bind ATP. N188 is a glycosylation site (N-linked (GlcNAc...) asparagine). The active-site Proton acceptor is D227.

This sequence belongs to the protein kinase superfamily. Ser/Thr protein kinase family. CK2 subfamily. In terms of assembly, heterotetramer of two catalytic alpha subunits and two regulatory beta subunits. Seems to be present in all plant organs. But seems to be less expressed than CKA2.

The protein localises to the nucleus. The protein resides in the nucleolus. It carries out the reaction L-seryl-[protein] + ATP = O-phospho-L-seryl-[protein] + ADP + H(+). The enzyme catalyses L-threonyl-[protein] + ATP = O-phospho-L-threonyl-[protein] + ADP + H(+). Inhibited by heparin. In terms of biological role, casein kinases are operationally defined by their preferential utilization of acidic proteins such as caseins as substrates. Phosphorylates casein in vitro. The alpha chain contains the catalytic site. The tetrameric holoenzyme CK2, composed of two alpha and two beta subunits, phosphorylates the transcription factor GBFl, resulting in stimulation of its DNA binding activity. CK2 phosphorylates the transcription factor PIF1 after an exposure to light, resulting in a proteasome-dependent degradation of PIF1 and promotion of photomorphogenesis. CK2 phosphorylates translation initiation factors. May participate in the regulation of the initiation of translation. Acts as a circadian clock component that maintains the correct period length through phosphorylation of CCA1. Required for the maintenance and control of genomic stability and chromatin structure. May act as an ectokinase that phosphorylates several extracellular proteins. In Arabidopsis thaliana (Mouse-ear cress), this protein is Casein kinase II subunit alpha-1.